The sequence spans 451 residues: Trigger factor (451 aa).

The PPIase FKBP-type domain maps to 173-258; the sequence is GDRVTLDFVG…LKKIEWAHLP (86 aa).

The protein belongs to the FKBP-type PPIase family. Tig subfamily.

It localises to the cytoplasm. The catalysed reaction is [protein]-peptidylproline (omega=180) = [protein]-peptidylproline (omega=0). Its function is as follows. Involved in protein export. Acts as a chaperone by maintaining the newly synthesized protein in an open conformation. Functions as a peptidyl-prolyl cis-trans isomerase. This Cupriavidus necator (strain ATCC 17699 / DSM 428 / KCTC 22496 / NCIMB 10442 / H16 / Stanier 337) (Ralstonia eutropha) protein is Trigger factor.